Consider the following 674-residue polypeptide: Methionine--tRNA ligase (674 aa).

Residues 11–21 carry the 'HIGH' region motif; the sequence is PYANGDLHLGH. Cys-142, Cys-145, Cys-155, and Cys-158 together coordinate Zn(2+). Residues 330–334 carry the 'KMSKS' region motif; sequence KMSKS. Lys-333 serves as a coordination point for ATP. In terms of domain architecture, tRNA-binding spans 574-674; the sequence is DFMKVDLRIA…EGAQPGMRVK (101 aa).

Belongs to the class-I aminoacyl-tRNA synthetase family. MetG type 1 subfamily. In terms of assembly, homodimer. The cofactor is Zn(2+).

It localises to the cytoplasm. It carries out the reaction tRNA(Met) + L-methionine + ATP = L-methionyl-tRNA(Met) + AMP + diphosphate. In terms of biological role, is required not only for elongation of protein synthesis but also for the initiation of all mRNA translation through initiator tRNA(fMet) aminoacylation. This Francisella tularensis subsp. tularensis (strain WY96-3418) protein is Methionine--tRNA ligase.